Consider the following 455-residue polypeptide: Adenylyltransferase and sulfurtransferase MOCS3 (455 aa).

ATP is bound by residues glycine 90, aspartate 111, 118–122, lysine 135, and 179–180; these read SNLAR and DN. The interval 156 to 236 is interaction with NFS1; that stretch reads AQALTPATAL…RPPPAETVTS (81 aa). Residues cysteine 220 and cysteine 223 each coordinate Zn(2+). The active-site Glycyl thioester intermediate; for adenylyltransferase activity is cysteine 237. Residues cysteine 295 and cysteine 298 each coordinate Zn(2+). A disulfide bond links cysteine 314 and cysteine 322. Residues 345 to 453 enclose the Rhodanese domain; that stretch reads SRSPHLLLDV…WAAKIDGTFP (109 aa). The active-site Cysteine persulfide intermediate; for sulfurtransferase activity is the cysteine 410. Cysteine 410 carries the cysteine persulfide modification.

The protein in the N-terminal section; belongs to the HesA/MoeB/ThiF family. UBA4 subfamily. Interacts with NFS1. The cofactor is Zn(2+).

Its subcellular location is the cytoplasm. It localises to the cytosol. It catalyses the reaction [molybdopterin-synthase sulfur-carrier protein]-C-terminal Gly-Gly + ATP + H(+) = [molybdopterin-synthase sulfur-carrier protein]-C-terminal Gly-Gly-AMP + diphosphate. It carries out the reaction [molybdopterin-synthase sulfur-carrier protein]-C-terminal Gly-Gly-AMP + S-sulfanyl-L-cysteinyl-[cysteine desulfurase] + AH2 = [molybdopterin-synthase sulfur-carrier protein]-C-terminal-Gly-aminoethanethioate + L-cysteinyl-[cysteine desulfurase] + A + AMP + 2 H(+). The protein operates within tRNA modification; 5-methoxycarbonylmethyl-2-thiouridine-tRNA biosynthesis. It participates in cofactor biosynthesis; molybdopterin biosynthesis. In terms of biological role, plays a central role in 2-thiolation of mcm(5)S(2)U at tRNA wobble positions of cytosolic tRNA(Lys), tRNA(Glu) and tRNA(Gln). Also essential during biosynthesis of the molybdenum cofactor. Acts by mediating the C-terminal thiocarboxylation of sulfur carriers URM1 and MOCS2A. Its N-terminus first activates URM1 and MOCS2A as acyl-adenylates (-COAMP), then the persulfide sulfur on the catalytic cysteine is transferred to URM1 and MOCS2A to form thiocarboxylation (-COSH) of their C-terminus. The reaction probably involves hydrogen sulfide that is generated from the persulfide intermediate and that acts as a nucleophile towards URM1 and MOCS2A. Subsequently, a transient disulfide bond is formed. Does not use thiosulfate as sulfur donor; NFS1 acting as a sulfur donor for thiocarboxylation reactions. The polypeptide is Adenylyltransferase and sulfurtransferase MOCS3 (Bos taurus (Bovine)).